The primary structure comprises 69 residues: U2-agatoxin-Ao1w (69 aa).

Residues 1–20 form the signal peptide; it reads MRAIISLLLISAMVFSMIEA. The propeptide occupies 21–34; it reads VPVEEGLQLFEGER. 3 disulfide bridges follow: Cys37/Cys53, Cys44/Cys58, and Cys52/Cys68.

It belongs to the neurotoxin 01 (U2-agtx) family. As to expression, expressed by the venom gland.

It localises to the secreted. Insect active toxin causing rapid but reversible paralysis in crickets. No activity shown in mammals. Does not show effect on mammalian voltage-gated calcium channels. This Agelena orientalis (Funnel-web spider) protein is U2-agatoxin-Ao1w.